A 393-amino-acid chain; its full sequence is Chalcone synthase (393 aa).

Cysteine 164 is a catalytic residue.

This sequence belongs to the thiolase-like superfamily. Chalcone/stilbene synthases family.

It catalyses the reaction (E)-4-coumaroyl-CoA + 3 malonyl-CoA + 3 H(+) = 2',4,4',6'-tetrahydroxychalcone + 3 CO2 + 4 CoA. It functions in the pathway secondary metabolite biosynthesis; flavonoid biosynthesis. In terms of biological role, the primary product of this enzyme is 4,2',4',6'-tetrahydroxychalcone (also termed naringenin-chalcone or chalcone) which can under specific conditions spontaneously isomerize into naringenin. This chain is Chalcone synthase (CHS), found in Vitis vinifera (Grape).